The chain runs to 393 residues: MTVPATRKDLMIVNMGPHHPSMHGVLRLIVTLDGEDVIDCEPILGYLHRGMEKIAENRTIIQYLPYVTRWDYLATMFTEAITVNAPEQLGNIQVPKRASYIRVIMLELSRIASHLLWLGPFMADIGAQTPFFYIFRERELLYDLFEAATGMRMMHNYFRIGGVATDLPYGWIDKCFDFCDYFLTGVVEYQKLITQNPIFLERVEGIGIIGGEEAINWGLSGPMLRASGIQWDLRKVDRYECYDEFNWEVQWQKEGDSLSRYLVRIGEMTESIKIIQQALEGIPGGPYENLEVRRFDKTKDSEWNDFEYRFISKKPSPSFELSKQELYVRVEAPKGELGIFLIGDNSVFPWRWKIRPPGFINLQILPQLVKRMKLADIMTILGSIDIIMGEVDR.

It belongs to the complex I 49 kDa subunit family. In terms of assembly, NDH is composed of at least 16 different subunits, 5 of which are encoded in the nucleus.

Its subcellular location is the plastid. The protein resides in the chloroplast thylakoid membrane. It carries out the reaction a plastoquinone + NADH + (n+1) H(+)(in) = a plastoquinol + NAD(+) + n H(+)(out). The enzyme catalyses a plastoquinone + NADPH + (n+1) H(+)(in) = a plastoquinol + NADP(+) + n H(+)(out). Functionally, NDH shuttles electrons from NAD(P)H:plastoquinone, via FMN and iron-sulfur (Fe-S) centers, to quinones in the photosynthetic chain and possibly in a chloroplast respiratory chain. The immediate electron acceptor for the enzyme in this species is believed to be plastoquinone. Couples the redox reaction to proton translocation, and thus conserves the redox energy in a proton gradient. The chain is NAD(P)H-quinone oxidoreductase subunit H, chloroplastic from Piper cenocladum (Ant piper).